A 112-amino-acid chain; its full sequence is 2Fe-2S ferredoxin (112 aa).

A 2Fe-2S ferredoxin-type domain is found at 5–107; that stretch reads IKVTFIINDG…GIKVRLPSAT (103 aa). [2Fe-2S] cluster is bound by residues cysteine 42, cysteine 48, cysteine 51, and cysteine 88.

This sequence belongs to the adrenodoxin/putidaredoxin family. It depends on [2Fe-2S] cluster as a cofactor.

In terms of biological role, ferredoxin are iron-sulfur proteins that transfer electrons in a wide variety of metabolic reactions. In Rickettsia montanensis, this protein is 2Fe-2S ferredoxin (fdxB).